Reading from the N-terminus, the 157-residue chain is Ribosome maturation factor RimP (157 aa).

This sequence belongs to the RimP family.

It is found in the cytoplasm. Functionally, required for maturation of 30S ribosomal subunits. The sequence is that of Ribosome maturation factor RimP from Levilactobacillus brevis (strain ATCC 367 / BCRC 12310 / CIP 105137 / JCM 1170 / LMG 11437 / NCIMB 947 / NCTC 947) (Lactobacillus brevis).